A 150-amino-acid polypeptide reads, in one-letter code: UPF0178 protein Bpet3884 (150 aa).

The protein belongs to the UPF0178 family.

The protein is UPF0178 protein Bpet3884 of Bordetella petrii (strain ATCC BAA-461 / DSM 12804 / CCUG 43448).